We begin with the raw amino-acid sequence, 455 residues long: Beta-1,4-mannosyltransferase bre-3 (455 aa).

Belongs to the glycosyltransferase 2 family. In terms of tissue distribution, endothelial cells.

The protein resides in the cytoplasm. It functions in the pathway protein modification; protein glycosylation. In terms of biological role, glycosyltransferase with a proposed role in glycosphingolipid biosynthesis. Involved in susceptibility to pore-forming crystal toxins in conjunction with bre-1, bre-2, bre-4 and bre-5. Involved in resistance to the nematotoxic C.cinerea galectin Cgl2. Has a role in determining brood size. The protein is Beta-1,4-mannosyltransferase bre-3 (bre-3) of Caenorhabditis elegans.